The primary structure comprises 890 residues: Inter-alpha-trypsin inhibitor heavy chain H3 (890 aa).

A signal peptide spans 1–20 (MAFAWWPCLILALLSSLAAS). A propeptide spanning residues 21–34 (GFPRSPFRLLGKRS) is cleaved from the precursor. In terms of domain architecture, VIT spans 29–158 (LLGKRSLPEG…KVTFELTYEE (130 aa)). N91 carries an N-linked (GlcNAc...) asparagine glycan. The VWFA domain maps to 284-467 (NVAFVIDISG…LQLQGFYEEV (184 aa)). Residue N580 is glycosylated (N-linked (GlcNAc...) asparagine). Aspartate 1-(chondroitin 4-sulfate)-ester is present on D651. Residues 652–890 (PHFIIQIPEK…HTDYIVPNLF (239 aa)) constitute a propeptide that is removed on maturation.

Belongs to the ITIH family. In terms of assembly, I-alpha-I plasma protease inhibitors are assembled from one or two heavy chains (HC) and one light chain, bikunin. Pre-alpha-inhibitor (P-alpha-I) is composed of ITIH3/HC3 and bikunin. Heavy chains are linked to bikunin via chondroitin 4-sulfate esterified to the alpha-carboxyl of the C-terminal aspartate after propeptide cleavage.

Its subcellular location is the secreted. Its function is as follows. May act as a carrier of hyaluronan in serum or as a binding protein between hyaluronan and other matrix protein, including those on cell surfaces in tissues to regulate the localization, synthesis and degradation of hyaluronan which are essential to cells undergoing biological processes. The protein is Inter-alpha-trypsin inhibitor heavy chain H3 (ITIH3) of Homo sapiens (Human).